The following is a 296-amino-acid chain: 4-hydroxy-tetrahydrodipicolinate synthase (296 aa).

Thr47 is a binding site for pyruvate. Tyr135 functions as the Proton donor/acceptor in the catalytic mechanism. Catalysis depends on Lys164, which acts as the Schiff-base intermediate with substrate. Ile207 is a binding site for pyruvate.

It belongs to the DapA family. As to quaternary structure, homotetramer; dimer of dimers.

It is found in the cytoplasm. The enzyme catalyses L-aspartate 4-semialdehyde + pyruvate = (2S,4S)-4-hydroxy-2,3,4,5-tetrahydrodipicolinate + H2O + H(+). Its pathway is amino-acid biosynthesis; L-lysine biosynthesis via DAP pathway; (S)-tetrahydrodipicolinate from L-aspartate: step 3/4. Functionally, catalyzes the condensation of (S)-aspartate-beta-semialdehyde [(S)-ASA] and pyruvate to 4-hydroxy-tetrahydrodipicolinate (HTPA). The chain is 4-hydroxy-tetrahydrodipicolinate synthase from Karelsulcia muelleri (strain GWSS) (Sulcia muelleri).